Here is a 244-residue protein sequence, read N- to C-terminus: MGRGPSIEARKNASDSKRGKIFTKIIRQIGVAARAGGGDPSNNPSLRVVIDKALASNMSKDVIERAIKKAIGEMEGVQYEEVRYEGYAPGGVAVIVDCLTDNRLRTVSDVRHAFSKCGGNMGTEGSVAFMFKRLGVLSYAHAIADEERITEAAIDAGAEDVMVYTEDDEIEVITTPEAFSRVKEEMAALGLMPYHAQITFRADSDIVVDGDTAIQVRKLLDILEDLDDVQDVYSNVDQVTLGKR.

Belongs to the TACO1 family.

It is found in the cytoplasm. The chain is Probable transcriptional regulatory protein XF_1906 from Xylella fastidiosa (strain 9a5c).